We begin with the raw amino-acid sequence, 289 residues long: Putative transmembrane protein ORF289 (289 aa).

Topologically, residues 1-152 (MAIAKEFLLT…QYTSVVTFRT (152 aa)) are extracellular. A helical transmembrane segment spans residues 153–173 (LVAPILYFFALFLVPAWSTVL). Over 174–234 (KQNPTFPQSQ…NGEVTSTQVN (61 aa)) the chain is Cytoplasmic. The chain crosses the membrane as a helical span at residues 235 to 255 (APIFIGVTTPSGVLVLAYNYY). At 256-289 (SGTISKYVSLTVTTTYGSATVINQFETKTTGGTT) the chain is on the extracellular side.

It is found in the host membrane. The polypeptide is Putative transmembrane protein ORF289 (Acidianus sp. F28 (AFV-2)).